We begin with the raw amino-acid sequence, 255 residues long: NAD kinase (255 aa).

The Proton acceptor role is filled by D44. NAD(+)-binding positions include 44–45, 114–115, D144, A152, and 155–160; these read DG, NE, and TAYNLS.

It belongs to the NAD kinase family. A divalent metal cation serves as cofactor.

The protein localises to the cytoplasm. It carries out the reaction NAD(+) + ATP = ADP + NADP(+) + H(+). In terms of biological role, involved in the regulation of the intracellular balance of NAD and NADP, and is a key enzyme in the biosynthesis of NADP. Catalyzes specifically the phosphorylation on 2'-hydroxyl of the adenosine moiety of NAD to yield NADP. The sequence is that of NAD kinase from Hyphomonas neptunium (strain ATCC 15444).